Consider the following 228-residue polypeptide: Early nodulin-like protein 18 (228 aa).

The signal sequence occupies residues 1-26 (MSPSCSSCVNVLLIMCLMLLSLSADA). A Phytocyanin domain is found at 28-148 (KNYTVGESTG…GQHFMINVTH (121 aa)). N-linked (GlcNAc...) asparagine glycans are attached at residues N29, N71, N94, and N145. Residues C86 and C136 are joined by a disulfide bond. The tract at residues 148–211 (HGQGLPDSSS…VHSKKSSSST (64 aa)) is disordered. A compositionally biased stretch (low complexity) spans 153–170 (PDSSSPDDAAAPGPSESS). Basic and acidic residues predominate over residues 188-204 (DHPKDIESADDDKEVHS). Residue S204 is the site of GPI-anchor amidated serine attachment. Positions 205–228 (KKSSSSTTKTSLFCFVFMGLFASF) are cleaved as a propeptide — removed in mature form.

This sequence belongs to the early nodulin-like (ENODL) family. In terms of tissue distribution, mostly expressed in seedlings, roots and flowers, and, to a lower extent, in leaves, stems and seeds.

It localises to the cell membrane. May act as a carbohydrate transporter. The sequence is that of Early nodulin-like protein 18 from Arabidopsis thaliana (Mouse-ear cress).